A 197-amino-acid chain; its full sequence is U1 small nuclear ribonucleoprotein C (197 aa).

Residues 4 to 36 (YYCEYCDIYLTHSSPVGRRQHNQGRKHISAKIE) form a Matrin-type zinc finger. A compositionally biased stretch (low complexity) spans 128–137 (FHNNKRINNI). The interval 128–178 (FHNNKRINNIPKPYNNYTNKPITNSSYKNDKQDYRNNNESNDNMNSNNFSN) is disordered. A compositionally biased stretch (polar residues) spans 142–154 (NNYTNKPITNSSY). The segment covering 164–178 (NNESNDNMNSNNFSN) has biased composition (low complexity).

The protein belongs to the U1 small nuclear ribonucleoprotein C family. In terms of assembly, U1 snRNP is composed of the 7 core Sm proteins B/B', D1, D2, D3, E, F and G that assemble in a heptameric protein ring on the Sm site of the small nuclear RNA to form the core snRNP, and at least 3 U1 snRNP-specific proteins U1-70K, U1-A and U1-C. U1-C interacts with U1 snRNA and the 5' splice-site region of the pre-mRNA.

It is found in the nucleus. Its function is as follows. Component of the spliceosomal U1 snRNP, which is essential for recognition of the pre-mRNA 5' splice-site and the subsequent assembly of the spliceosome. U1-C is directly involved in initial 5' splice-site recognition for both constitutive and regulated alternative splicing. The interaction with the 5' splice-site seems to precede base-pairing between the pre-mRNA and the U1 snRNA. Stimulates commitment or early (E) complex formation by stabilizing the base pairing of the 5' end of the U1 snRNA and the 5' splice-site region. This is U1 small nuclear ribonucleoprotein C (SNRPC) from Plasmodium berghei (strain Anka).